The primary structure comprises 323 residues: Tumor-associated calcium signal transducer 2 (323 aa).

An N-terminal signal peptide occupies residues 1 to 26 (MARGPGLAPPPLRLPLLLLVLAAVTG). The Extracellular segment spans residues 27–274 (HTAAQDNCTC…PPKFSMKRLT (248 aa)). A glycan (N-linked (GlcNAc...) asparagine) is linked at asparagine 33. The 76-residue stretch at 70 to 145 (TSKCLLLKAR…TDKGDLSLRC (76 aa)) folds into the Thyroglobulin type-1 domain. 3 cysteine pairs are disulfide-bonded: cysteine 73–cysteine 108, cysteine 119–cysteine 125, and cysteine 127–cysteine 145. The N-linked (GlcNAc...) asparagine glycan is linked to asparagine 120. N-linked (GlcNAc...) asparagine glycosylation is found at asparagine 168 and asparagine 208. The helical transmembrane segment at 275-297 (AGLIAVIVVVVVALVAGMAVLVI) threads the bilayer. Over 298 to 323 (TNRRKSGKYKKVEIKELGELRKEPSL) the chain is Cytoplasmic.

This sequence belongs to the EPCAM family. In terms of processing, the N-terminus is blocked. Placenta, pancreatic carcinoma cell lines.

The protein localises to the membrane. Functionally, may function as a growth factor receptor. The chain is Tumor-associated calcium signal transducer 2 (TACSTD2) from Homo sapiens (Human).